A 364-amino-acid chain; its full sequence is Methylthioribose-1-phosphate isomerase (364 aa).

Residues Arg-49 to Ala-51, Arg-89, and Gln-201 contribute to the substrate site. Asp-242 acts as the Proton donor in catalysis. Asn-252–Lys-253 lines the substrate pocket.

This sequence belongs to the eIF-2B alpha/beta/delta subunits family. MtnA subfamily.

The catalysed reaction is 5-(methylsulfanyl)-alpha-D-ribose 1-phosphate = 5-(methylsulfanyl)-D-ribulose 1-phosphate. Its pathway is amino-acid biosynthesis; L-methionine biosynthesis via salvage pathway; L-methionine from S-methyl-5-thio-alpha-D-ribose 1-phosphate: step 1/6. Its function is as follows. Catalyzes the interconversion of methylthioribose-1-phosphate (MTR-1-P) into methylthioribulose-1-phosphate (MTRu-1-P). The sequence is that of Methylthioribose-1-phosphate isomerase from Leptospira interrogans serogroup Icterohaemorrhagiae serovar copenhageni (strain Fiocruz L1-130).